A 221-amino-acid polypeptide reads, in one-letter code: Elongation factor Ts (221 aa).

Residues 82 to 85 are involved in Mg(2+) ion dislocation from EF-Tu; the sequence is TDFV.

Belongs to the EF-Ts family.

It localises to the cytoplasm. In terms of biological role, associates with the EF-Tu.GDP complex and induces the exchange of GDP to GTP. It remains bound to the aminoacyl-tRNA.EF-Tu.GTP complex up to the GTP hydrolysis stage on the ribosome. The polypeptide is Elongation factor Ts (Synechococcus elongatus (strain ATCC 33912 / PCC 7942 / FACHB-805) (Anacystis nidulans R2)).